The chain runs to 181 residues: MSSVIASRRYASALLSAAEEGGFLDQATQELAQIKIVLDQSRELVHVLRSPVINADKKTHILQEVFADTVGDKVMIFLKLIAKKKRSGMLPQIIVEYQKLLDEANGIINVSITSATPMSDDQVKALVAKLSSYTGKTIREKMALNGELLGGVTVKIGDTILDGSVRHQLQLLKKALVSERV.

Belongs to the ATPase delta chain family. F-type ATPases have 2 components, F(1) - the catalytic core - and F(0) - the membrane proton channel. F(1) has five subunits: alpha(3), beta(3), gamma(1), delta(1), epsilon(1). F(0) has three main subunits: a(1), b(2) and c(10-14). The alpha and beta chains form an alternating ring which encloses part of the gamma chain. F(1) is attached to F(0) by a central stalk formed by the gamma and epsilon chains, while a peripheral stalk is formed by the delta and b chains.

It localises to the cell inner membrane. F(1)F(0) ATP synthase produces ATP from ADP in the presence of a proton or sodium gradient. F-type ATPases consist of two structural domains, F(1) containing the extramembraneous catalytic core and F(0) containing the membrane proton channel, linked together by a central stalk and a peripheral stalk. During catalysis, ATP synthesis in the catalytic domain of F(1) is coupled via a rotary mechanism of the central stalk subunits to proton translocation. In terms of biological role, this protein is part of the stalk that links CF(0) to CF(1). It either transmits conformational changes from CF(0) to CF(1) or is implicated in proton conduction. This is ATP synthase subunit delta from Chlorobium phaeobacteroides (strain DSM 266 / SMG 266 / 2430).